Reading from the N-terminus, the 136-residue chain is 14 kDa fusion protein (136 aa).

The interval 22 to 50 (EAWTTSRSSTGSANPSASRKPARYPRIHA) is disordered. Residues 24 to 38 (WTTSRSSTGSANPSA) are compositionally biased toward polar residues. N86 is a glycosylation site (N-linked (GlcNAc...) asparagine; by host).

It belongs to the poxviruses fusion protein family. As to quaternary structure, homotrimer, covalently linked.

It localises to the virion membrane. Its function is as follows. This protein appears to play an important role in virus penetration at the level of cell fusion. The N-terminal proximal region is essential for fusion ability. Essential in fusing the outermost of the two Golgi-derived membranes enveloping the virus with the plasma membrane, and in its subsequent release extracellularly. This is 14 kDa fusion protein from Vaccinia virus (strain WR 65-16) (VACV).